The following is a 673-amino-acid chain: Mechanosensitive ion channel protein 2, chloroplastic (673 aa).

The transit peptide at Met-1 to Arg-75 directs the protein to the chloroplast. Transmembrane regions (helical) follow at residues Phe-107–Leu-127, Tyr-152–Cys-172, Leu-193–Ile-213, Ala-240–Ser-260, and Trp-264–Thr-284. Positions Lys-492–Pro-673 are disordered. Basic and acidic residues-rich tracts occupy residues Ala-510–Ser-525, Thr-564–Pro-576, and Gly-617–Gly-642. Ser-571 carries the phosphoserine modification. Residues Ser-661 to Pro-673 show a composition bias toward polar residues.

This sequence belongs to the MscS (TC 1.A.23) family. In terms of tissue distribution, widely expressed.

It is found in the plastid. It localises to the chloroplast membrane. Mechanosensitive channel that opens in response to stretch forces in the membrane lipid bilayer. Controls plastid size, shape, and perhaps division during normal plant development by altering ion flux in response to changes in membrane tension. Acts as a component of the chloroplast division machinery. This chain is Mechanosensitive ion channel protein 2, chloroplastic (MSL2), found in Arabidopsis thaliana (Mouse-ear cress).